Consider the following 212-residue polypeptide: Pyrrolidone-carboxylate peptidase (212 aa).

Catalysis depends on residues Glu78, Cys141, and His165.

Belongs to the peptidase C15 family. Homotetramer.

It localises to the cytoplasm. The catalysed reaction is Release of an N-terminal pyroglutamyl group from a polypeptide, the second amino acid generally not being Pro.. Its function is as follows. Removes 5-oxoproline from various penultimate amino acid residues except L-proline. This Staphylococcus aureus (strain bovine RF122 / ET3-1) protein is Pyrrolidone-carboxylate peptidase.